A 212-amino-acid polypeptide reads, in one-letter code: Ion-translocating oxidoreductase complex subunit G (212 aa).

The helical transmembrane segment at 9-29 (GLLLGLFALLCTGLVAIVNQL) threads the bilayer. Thr-176 carries the FMN phosphoryl threonine modification.

It belongs to the RnfG family. In terms of assembly, the complex is composed of six subunits: RnfA, RnfB, RnfC, RnfD, RnfE and RnfG. It depends on FMN as a cofactor.

The protein localises to the cell inner membrane. Functionally, part of a membrane-bound complex that couples electron transfer with translocation of ions across the membrane. This is Ion-translocating oxidoreductase complex subunit G from Shewanella piezotolerans (strain WP3 / JCM 13877).